The following is a 198-amino-acid chain: Probable nicotinate-nucleotide adenylyltransferase (198 aa).

It belongs to the NadD family.

It catalyses the reaction nicotinate beta-D-ribonucleotide + ATP + H(+) = deamido-NAD(+) + diphosphate. The protein operates within cofactor biosynthesis; NAD(+) biosynthesis; deamido-NAD(+) from nicotinate D-ribonucleotide: step 1/1. In terms of biological role, catalyzes the reversible adenylation of nicotinate mononucleotide (NaMN) to nicotinic acid adenine dinucleotide (NaAD). The protein is Probable nicotinate-nucleotide adenylyltransferase of Chlorobium phaeobacteroides (strain BS1).